The chain runs to 169 residues: Protein AIG2 B (169 aa).

A substrate-binding site is contributed by 15 to 20 (YGSFQE). The active-site Proton acceptor is the Glu83.

The protein belongs to the gamma-glutamylcyclotransferase family. In terms of tissue distribution, expressed in roots, leaves and stems.

Functionally, putative gamma-glutamylcyclotransferase. The protein is Protein AIG2 B of Arabidopsis thaliana (Mouse-ear cress).